We begin with the raw amino-acid sequence, 159 residues long: Protein-export protein SecB (159 aa).

Belongs to the SecB family. As to quaternary structure, homotetramer, a dimer of dimers. One homotetramer interacts with 1 SecA dimer.

It localises to the cytoplasm. One of the proteins required for the normal export of preproteins out of the cell cytoplasm. It is a molecular chaperone that binds to a subset of precursor proteins, maintaining them in a translocation-competent state. It also specifically binds to its receptor SecA. In Nitrosospira multiformis (strain ATCC 25196 / NCIMB 11849 / C 71), this protein is Protein-export protein SecB.